A 247-amino-acid chain; its full sequence is tRNA (guanine-N(1)-)-methyltransferase (247 aa).

S-adenosyl-L-methionine is bound by residues Gly117 and 136 to 141 (LGDFVL).

It belongs to the RNA methyltransferase TrmD family. As to quaternary structure, homodimer.

Its subcellular location is the cytoplasm. It carries out the reaction guanosine(37) in tRNA + S-adenosyl-L-methionine = N(1)-methylguanosine(37) in tRNA + S-adenosyl-L-homocysteine + H(+). Its function is as follows. Specifically methylates guanosine-37 in various tRNAs. In Myxococcus xanthus (strain DK1622), this protein is tRNA (guanine-N(1)-)-methyltransferase.